We begin with the raw amino-acid sequence, 472 residues long: MGRSSARDGQMPLRDIMDKKKRKNEYALERLFGRILSPFEAFLKRTTAGGIVLMGTTVLTLIAANSAWGDAFLRFWEQRVRFGIGSLQLEMSLHDLINDGLMSLFFLVVGLELKREMKVGELSSWRDAALPVFAAAGGMVVPALVYFAVNPHGTAAAGWGIPMATDIAFAVGILVLLSWRIPPGLIIFLTALAIADDLGAVLVIALFYTHEISLGAIGFASAVLFLLLLLNRGGIRHAIPYGVLGVLLWMALHHSGVHSTLAGVLLAFTIPARPARAPAEFEQRLVELQNAFHAEAAAPDFVDQPLSNPRMATIAETLERNSRAVQSPLQRMEHRLGPWVTFIVIPLFALNNVGIDFEKIALLQGLCEPVTMGVCLGLVFGKFTGISVFSWIAVRLGIGRLPSEVRWRHLLGVAWLGGIGFTMSLFISQLAFDDRLLQEQAKLGILTASLLSAMIGMTWLYFGGTRARPNPE.

The next 11 membrane-spanning stretches (helical) occupy residues 48-68, 91-111, 129-149, 157-177, 185-205, 210-230, 237-257, 337-357, 374-394, 410-430, and 443-463; these read AGGIVLMGTTVLTLIAANSAW, MSLHDLINDGLMSLFFLVVGL, ALPVFAAAGGMVVPALVYFAV, AGWGIPMATDIAFAVGILVLL, LIIFLTALAIADDLGAVLVIA, HEISLGAIGFASAVLFLLLLL, HAIPYGVLGVLLWMALHHSGV, GPWVTFIVIPLFALNNVGIDF, VCLGLVFGKFTGISVFSWIAV, LLGVAWLGGIGFTMSLFISQL, and LGILTASLLSAMIGMTWLYFG.

It belongs to the NhaA Na(+)/H(+) (TC 2.A.33) antiporter family.

The protein resides in the cell inner membrane. The enzyme catalyses Na(+)(in) + 2 H(+)(out) = Na(+)(out) + 2 H(+)(in). In terms of biological role, na(+)/H(+) antiporter that extrudes sodium in exchange for external protons. This chain is Na(+)/H(+) antiporter NhaA, found in Syntrophobacter fumaroxidans (strain DSM 10017 / MPOB).